The chain runs to 603 residues: ABC transporter E family member 1 (603 aa).

2 4Fe-4S ferredoxin-type domains span residues 7 to 39 (RIAIVSEDRCKPKKCRQECKKSCPVVKTGKLCI) and 46 to 75 (KSAFISEELCIGCGICVKKCPFEAIQIINL). 2 consecutive ABC transporter domains span residues 70–315 (IQII…FLAG) and 344–566 (VKSY…LSHL). ATP is bound by residues 110-117 (GTNGIGKS) and 381-388 (GENGTGKT).

Belongs to the ABC transporter superfamily. ABCE family. In terms of tissue distribution, expressed in roots, stems, leaves, flowers and siliques.

It is found in the membrane. The sequence is that of ABC transporter E family member 1 (ABCE1) from Arabidopsis thaliana (Mouse-ear cress).